Consider the following 736-residue polypeptide: Catalase-peroxidase (736 aa).

Positions 1–10 (MDAKTDDKGA) are enriched in basic and acidic residues. A disordered region spans residues 1–26 (MDAKTDDKGAGKCPFSGGSHGHRNRD). Residues 96-218 (WHSAGTYRIT…LGAVQMGLIY (123 aa)) constitute a cross-link (tryptophyl-tyrosyl-methioninium (Trp-Tyr) (with M-244)). The active-site Proton acceptor is His-97. Positions 218–244 (YVNPEGPNGNPDPVAAAKDIRETFARM) form a cross-link, tryptophyl-tyrosyl-methioninium (Tyr-Met) (with W-96). His-259 is a binding site for heme b.

It belongs to the peroxidase family. Peroxidase/catalase subfamily. As to quaternary structure, homodimer or homotetramer. The cofactor is heme b. Formation of the three residue Trp-Tyr-Met cross-link is important for the catalase, but not the peroxidase activity of the enzyme.

It catalyses the reaction H2O2 + AH2 = A + 2 H2O. The enzyme catalyses 2 H2O2 = O2 + 2 H2O. Its function is as follows. Bifunctional enzyme with both catalase and broad-spectrum peroxidase activity. This chain is Catalase-peroxidase, found in Rhodopseudomonas palustris (strain ATCC BAA-98 / CGA009).